The following is a 202-amino-acid chain: Probable nicotinate-nucleotide adenylyltransferase (202 aa).

Belongs to the NadD family.

It catalyses the reaction nicotinate beta-D-ribonucleotide + ATP + H(+) = deamido-NAD(+) + diphosphate. The protein operates within cofactor biosynthesis; NAD(+) biosynthesis; deamido-NAD(+) from nicotinate D-ribonucleotide: step 1/1. Catalyzes the reversible adenylation of nicotinate mononucleotide (NaMN) to nicotinic acid adenine dinucleotide (NaAD). The chain is Probable nicotinate-nucleotide adenylyltransferase from Synechococcus sp. (strain JA-2-3B'a(2-13)) (Cyanobacteria bacterium Yellowstone B-Prime).